We begin with the raw amino-acid sequence, 394 residues long: Actin-related protein 2 (394 aa).

Methionine 1 is subject to N-acetylmethionine. ATP-binding positions include 160–162 (GDG) and 214–218 (RMIKE). N6-acetyllysine is present on lysine 299. 305–310 (GGSTMY) is an ATP binding site. An N6-acetyllysine modification is found at lysine 322.

This sequence belongs to the actin family. ARP2 subfamily. Component of the Arp2/3 complex composed of ACTR2/ARP2, ACTR3/ARP3, ARPC1B/p41-ARC, ARPC2/p34-ARC, ARPC3/p21-ARC, ARPC4/p20-ARC and ARPC5/p16-ARC. Interacts with AVIL.

Its subcellular location is the cytoplasm. The protein localises to the cytoskeleton. The protein resides in the cell projection. It is found in the nucleus. In terms of biological role, ATP-binding component of the Arp2/3 complex, a multiprotein complex that mediates actin polymerization upon stimulation by nucleation-promoting factor (NPF). The Arp2/3 complex mediates the formation of branched actin networks in the cytoplasm, providing the force for cell motility. Seems to contact the pointed end of the daughter actin filament. In podocytes, required for the formation of lamellipodia downstream of AVIL and PLCE1 regulation. In addition to its role in the cytoplasmic cytoskeleton, the Arp2/3 complex also promotes actin polymerization in the nucleus, thereby regulating gene transcription and repair of damaged DNA. The Arp2/3 complex promotes homologous recombination (HR) repair in response to DNA damage by promoting nuclear actin polymerization, leading to drive motility of double-strand breaks (DSBs). In Pongo abelii (Sumatran orangutan), this protein is Actin-related protein 2 (ACTR2).